The following is a 626-amino-acid chain: 5'-AMP-activated protein kinase catalytic subunit alpha-2 (626 aa).

Residues M1–S24 are compositionally biased toward basic and acidic residues. Positions M1 to E77 are disordered. A compositionally biased stretch (basic residues) spans N38–K49. The span at D58–E77 shows a compositional bias: polar residues. The Protein kinase domain maps to Y87–F339. ATP is bound by residues L93–V101 and K116. D210 serves as the catalytic Proton acceptor. Residue T243 is modified to Phosphothreonine; by par-4. The tract at residues S541–T568 is disordered. Low complexity predominate over residues G542–S555.

This sequence belongs to the protein kinase superfamily. CAMK Ser/Thr protein kinase family. SNF1 subfamily. Tetramer, composed of 2 regulatory (R) and 2 catalytic (C) subunits. In the presence of cAMP it dissociates into 2 active monomeric C subunits and an R dimer that binds four cAMP molecules. Phosphorylated on Thr-243 in response to oxidative stress and during dauer development. Phosphorylation at Thr-243 is increased in response to sodium azide or the AMP analog AICAR (5-amino-1-(5-phospho-beta-D-ribosyl)imidazole-4-carboxamide). As to expression, expressed in the pharynx, the ventral cord, neurons including the hermaphrodite-specific neuron, body wall muscles, the vulva, the excretory canal, and weakly in the intestine.

The catalysed reaction is L-seryl-[protein] + ATP = O-phospho-L-seryl-[protein] + ADP + H(+). It carries out the reaction L-threonyl-[protein] + ATP = O-phospho-L-threonyl-[protein] + ADP + H(+). Its activity is regulated as follows. Activated by phosphorylation. Acts as a sensor that couples lifespan to information about energy levels and insulin-like signals. Role in motility and response to oxidative stress. Involved in the establishment of germline stem cell (GSC) quiescence during dauer development. Plays a role in axon regrowth after axotomy in PLM neurons. Plays a role in the maintenance of glycogen stores which are necessary for resistance to hyperosmotic stress. Plays a role in the regulation of flp-7 secretion from ASI neurons. Keeps the CREB-regulated transcription coactivator 1 homolog crtc-1 inactive which in turn inhibits flp-7 secretion. Following serotonin signaling, derepresses crtc-1 which stimulates flp-7 secretion and subsequent body fat loss. This chain is 5'-AMP-activated protein kinase catalytic subunit alpha-2, found in Caenorhabditis elegans.